The sequence spans 417 residues: MSLDTPNEKPAGKARARKAPASKAGATNAASTSSSTKAITDTLLTVLSGNLQARVPKELVGESGVELAHLLNQVLDQFAASEHRKHVAAQEIDQALDALIGLVREGDLSRWNTTTEDPQLGPLLEGFGKVIETLRTFVREINEAALRLSSSANQVLAASTQHETSSTEQAAAIHETTATMEELKHASAQIAENAGSVARVAEETLGAARAGRGAIGEFIQAMQQIRSDGVAVADSIAKLSKRVERIGTVVEVIDEIADRSDLLALNAALEGSRAGEAGKGFSIVAAEMRRLAENVLDSTKEIKNLITEIREATAAAAGAAEASKSATESGEKLGAVAAQAVEGILAGVQETSDAARVINLATQQQRTATEQVVASMAEIEDVTRQTTQASKQATGAAAELTQLAGRLAELIKRFKAD.

Residues methionine 1–alanine 11 show a composition bias toward basic and acidic residues. The tract at residues methionine 1–serine 34 is disordered. Over residues alanine 21–serine 34 the composition is skewed to low complexity. A Methyl-accepting transducer domain is found at alanine 144–glutamate 380.

The protein belongs to the methyl-accepting chemotaxis (MCP) protein family. In terms of processing, methylated. Saturated fatty acids capric acid and lauric acid stimulate methylation. Short-chain alcohols, such as isoamyl alcohol, and some other solvents cause demethylation.

Its subcellular location is the cytoplasm. Functionally, methyl-accepting taxis protein necessary for the proper aggregation of cells to form fruiting bodies. Frz genes define a system of signal transduction analogous to the enterobacterial chemotaxis systems. The sequence is that of Frizzy aggregation protein FrzCD (frzCD) from Myxococcus xanthus.